Consider the following 92-residue polypeptide: C-C motif chemokine 4 (92 aa).

An N-terminal signal peptide occupies residues 1–23 (MKLCVSAFSLLLLVAAFCDSVLS). 2 cysteine pairs are disulfide-bonded: Cys34/Cys58 and Cys35/Cys74.

It belongs to the intercrine beta (chemokine CC) family. As to quaternary structure, homodimer.

Its subcellular location is the secreted. Its function is as follows. Monokine with inflammatory and chemokinetic properties. The polypeptide is C-C motif chemokine 4 (Ccl4) (Rattus norvegicus (Rat)).